We begin with the raw amino-acid sequence, 336 residues long: Glycerol-3-phosphate dehydrogenase [NAD(P)+] (336 aa).

S11, W12, R32, and K109 together coordinate NADPH. Positions 109, 140, and 142 each coordinate sn-glycerol 3-phosphate. NADPH is bound at residue A144. Positions 195, 248, 258, 259, and 260 each coordinate sn-glycerol 3-phosphate. The active-site Proton acceptor is K195. R259 contributes to the NADPH binding site. Residues V283 and E285 each coordinate NADPH.

This sequence belongs to the NAD-dependent glycerol-3-phosphate dehydrogenase family.

Its subcellular location is the cytoplasm. It carries out the reaction sn-glycerol 3-phosphate + NAD(+) = dihydroxyacetone phosphate + NADH + H(+). It catalyses the reaction sn-glycerol 3-phosphate + NADP(+) = dihydroxyacetone phosphate + NADPH + H(+). It participates in membrane lipid metabolism; glycerophospholipid metabolism. Its function is as follows. Catalyzes the reduction of the glycolytic intermediate dihydroxyacetone phosphate (DHAP) to sn-glycerol 3-phosphate (G3P), the key precursor for phospholipid synthesis. This Leuconostoc mesenteroides subsp. mesenteroides (strain ATCC 8293 / DSM 20343 / BCRC 11652 / CCM 1803 / JCM 6124 / NCDO 523 / NBRC 100496 / NCIMB 8023 / NCTC 12954 / NRRL B-1118 / 37Y) protein is Glycerol-3-phosphate dehydrogenase [NAD(P)+].